The sequence spans 215 residues: Pyrrolidone-carboxylate peptidase (215 aa).

Catalysis depends on residues Glu80, Cys143, and His167.

Belongs to the peptidase C15 family. In terms of assembly, homotetramer.

Its subcellular location is the cytoplasm. The catalysed reaction is Release of an N-terminal pyroglutamyl group from a polypeptide, the second amino acid generally not being Pro.. Removes 5-oxoproline from various penultimate amino acid residues except L-proline. The polypeptide is Pyrrolidone-carboxylate peptidase (Bacillus cereus (strain G9842)).